The sequence spans 507 residues: Probable aldehyde dehydrogenase (507 aa).

Position 219-225 (219-225) interacts with NAD(+); the sequence is GFGAEAG. Active-site residues include Glu-263 and Cys-302.

The protein belongs to the aldehyde dehydrogenase family.

It catalyses the reaction an aldehyde + NAD(+) + H2O = a carboxylate + NADH + 2 H(+). The chain is Probable aldehyde dehydrogenase from Mycobacterium bovis (strain ATCC BAA-935 / AF2122/97).